The following is a 418-amino-acid chain: 3-phosphoshikimate 1-carboxyvinyltransferase (418 aa).

3-phosphoshikimate is bound by residues K26, S27, and R31. K26 contributes to the phosphoenolpyruvate binding site. Phosphoenolpyruvate is bound by residues G97 and R125. The 3-phosphoshikimate site is built by S170, S171, Q172, D297, N320, and K324. Q172 is a phosphoenolpyruvate binding site. The active-site Proton acceptor is D297. The phosphoenolpyruvate site is built by R328, R375, and K400.

The protein belongs to the EPSP synthase family. As to quaternary structure, monomer.

Its subcellular location is the cytoplasm. The catalysed reaction is 3-phosphoshikimate + phosphoenolpyruvate = 5-O-(1-carboxyvinyl)-3-phosphoshikimate + phosphate. Its pathway is metabolic intermediate biosynthesis; chorismate biosynthesis; chorismate from D-erythrose 4-phosphate and phosphoenolpyruvate: step 6/7. Catalyzes the transfer of the enolpyruvyl moiety of phosphoenolpyruvate (PEP) to the 5-hydroxyl of shikimate-3-phosphate (S3P) to produce enolpyruvyl shikimate-3-phosphate and inorganic phosphate. This Pseudomonas syringae pv. syringae (strain B728a) protein is 3-phosphoshikimate 1-carboxyvinyltransferase.